A 212-amino-acid polypeptide reads, in one-letter code: N-(5'-phosphoribosyl)anthranilate isomerase (212 aa).

This sequence belongs to the TrpF family.

It catalyses the reaction N-(5-phospho-beta-D-ribosyl)anthranilate = 1-(2-carboxyphenylamino)-1-deoxy-D-ribulose 5-phosphate. It functions in the pathway amino-acid biosynthesis; L-tryptophan biosynthesis; L-tryptophan from chorismate: step 3/5. This Myxococcus xanthus (strain DK1622) protein is N-(5'-phosphoribosyl)anthranilate isomerase.